Consider the following 251-residue polypeptide: MSGHNKWASIKHKKTATDVKKGKVFTKIIREIVVATKESGAQIENNARLRKAIEDAKEANMPQDNIKKAIQRGTGEIPGAIYEEMVYEGYGPAGVALIVEVTTDNKNRTASDIRKMFSSHNGNLGEAGCVGWMFERKGYITVKKSAADEEIVMNTVLEAAVEDFKSEADSDVYEIITLSSDLETVKNVLKEKNITVESAEVTMVPQTQIALKSDNAKNMLKLMDALEDHDDVKNVYANFDISSEDMEKLNA.

It belongs to the TACO1 family.

Its subcellular location is the cytoplasm. In Endomicrobium trichonymphae, this protein is Probable transcriptional regulatory protein TGRD_462.